The primary structure comprises 107 residues: Thiosulfate sulfurtransferase GlpE (107 aa).

In terms of domain architecture, Rhodanese spans 19–107; that stretch reads KDHNARMVDI…WNKAGLPVEK (89 aa). Cys67 (cysteine persulfide intermediate) is an active-site residue.

This sequence belongs to the GlpE family.

It localises to the cytoplasm. It catalyses the reaction thiosulfate + hydrogen cyanide = thiocyanate + sulfite + 2 H(+). It carries out the reaction thiosulfate + [thioredoxin]-dithiol = [thioredoxin]-disulfide + hydrogen sulfide + sulfite + 2 H(+). Transferase that catalyzes the transfer of sulfur from thiosulfate to thiophilic acceptors such as cyanide or dithiols. May function in a CysM-independent thiosulfate assimilation pathway by catalyzing the conversion of thiosulfate to sulfite, which can then be used for L-cysteine biosynthesis. The chain is Thiosulfate sulfurtransferase GlpE from Aliivibrio salmonicida (strain LFI1238) (Vibrio salmonicida (strain LFI1238)).